Consider the following 376-residue polypeptide: Phosphatidylinositol/phosphatidylcholine transfer protein SFH11 (376 aa).

Residues Met1 to Gln20 are compositionally biased toward basic and acidic residues. The disordered stretch occupies residues Met1 to Asn24. One can recognise a CRAL-TRIO domain in the interval Glu92–Asp266. Positions Met323 to Leu357 form a coiled coil.

This sequence belongs to the SFH family.

The protein resides in the golgi apparatus membrane. The protein localises to the cell membrane. Required for transport of secretory proteins from the Golgi complex. Catalyzes the transfer of phosphatidylinositol and phosphatidylcholine between membranes in vitro. The chain is Phosphatidylinositol/phosphatidylcholine transfer protein SFH11 (SFH11) from Arabidopsis thaliana (Mouse-ear cress).